The sequence spans 1160 residues: Large proline-rich protein BAG6 (1160 aa).

One can recognise a Ubiquitin-like domain in the interval 7–82 (IEVTVKTLDS…HLVERPPPQS (76 aa)). Disordered stretches follow at residues 76-114 (ERPPPQSSQPGGGGGGVSGSSGAADGGSSSSQSSAYTTS), 206-261 (EGQS…HPSP), 367-422 (IPMN…GQGT), 478-547 (ASAG…QTNQ), 563-628 (GDQT…DNLA), 672-711 (SGQPVFPSPNQQPPPSQATPPSAPSGPAPTTAPSGGAETL), 962-1038 (SARR…AEPW), and 1126-1160 (YAQQVKSDIKKRLSDDPDYNHQRFPNTHRVFSEDA). Residues 85–94 (PGGGGGGVSG) show a composition bias toward gly residues. 2 stretches are compositionally biased toward low complexity: residues 95–110 (SSGAADGGSSSSQSSA) and 223–233 (SSSSFSAHPMD). Composition is skewed to polar residues over residues 247 to 257 (QTEGETQSGPN) and 371 to 417 (LGST…QQTG). Low complexity-rich tracts occupy residues 478–495 (ASAGHQGQQQGTAGAGAQ) and 566–614 (TSTT…STAS). Residues 677 to 698 (FPSPNQQPPPSQATPPSAPSGP) show a composition bias toward pro residues. Residues 699 to 708 (APTTAPSGGA) are compositionally biased toward low complexity. The segment covering 1132-1146 (SDIKKRLSDDPDYNH) has biased composition (basic and acidic residues).

In terms of assembly, component of the bag6/bat3 complex.

The protein localises to the cytoplasm. It localises to the cytosol. The protein resides in the nucleus. It is found in the secreted. Its subcellular location is the extracellular exosome. Its function is as follows. ATP-independent molecular chaperone preventing the aggregation of misfolded and hydrophobic patches-containing proteins. Functions as part of a cytosolic protein quality control complex, the bag6/bat3 complex, which maintains these client proteins in a soluble state and participates in their proper delivery to the endoplasmic reticulum or alternatively can promote their sorting to the proteasome where they undergo degradation. The bag6/bat3 complex is involved in the post-translational delivery of tail-anchored/type II transmembrane proteins to the endoplasmic reticulum membrane. Similarly, the bag6/bat3 complex also functions as a sorting platform for proteins of the secretory pathway that are mislocalized to the cytosol either delivering them to the proteasome for degradation or to the endoplasmic reticulum. The bag6/bat3 complex also plays a role in the endoplasmic reticulum-associated degradation (ERAD), a quality control mechanism that eliminates unwanted proteins of the endoplasmic reticulum through their retrotranslocation to the cytosol and their targeting to the proteasome. It maintains these retrotranslocated proteins in an unfolded yet soluble state condition in the cytosol to ensure their proper delivery to the proteasome. Also required for selective ubiquitin-mediated degradation of defective nascent chain polypeptides by the proteasome. Also involved in endoplasmic reticulum stress-induced pre-emptive quality control, a mechanism that selectively attenuates the translocation of newly synthesized proteins into the endoplasmic reticulum and reroutes them to the cytosol for proteasomal degradation. May ensure the proper degradation of these proteins and thereby protects the endoplasmic reticulum from protein overload upon stress. By stabilizing a large spectrum of proteins, may indirectly affect different biological processes including apoptosis. By controlling the steady-state expression of the IGF1R receptor, indirectly regulates the insulin-like growth factor receptor signaling pathway. When nuclear, may also act as a component of some chromatin regulator complex. This is Large proline-rich protein BAG6 from Danio rerio (Zebrafish).